The chain runs to 146 residues: uncharacterized protein (146 aa).

This is an uncharacterized protein from Thermoproteus tenax virus 1 (strain KRA1) (TTV1).